Consider the following 1508-residue polypeptide: DNA-directed RNA polymerase subunit beta' (1508 aa).

Residues cysteine 71, cysteine 73, cysteine 86, and cysteine 89 each contribute to the Zn(2+) site. Positions 470, 472, and 474 each coordinate Mg(2+). 4 residues coordinate Zn(2+): cysteine 804, cysteine 878, cysteine 885, and cysteine 888.

Belongs to the RNA polymerase beta' chain family. The RNAP catalytic core consists of 2 alpha, 1 beta, 1 beta' and 1 omega subunit. When a sigma factor is associated with the core the holoenzyme is formed, which can initiate transcription. Requires Mg(2+) as cofactor. Zn(2+) is required as a cofactor.

It carries out the reaction RNA(n) + a ribonucleoside 5'-triphosphate = RNA(n+1) + diphosphate. DNA-dependent RNA polymerase catalyzes the transcription of DNA into RNA using the four ribonucleoside triphosphates as substrates. In Campylobacter fetus subsp. fetus (strain 82-40), this protein is DNA-directed RNA polymerase subunit beta'.